We begin with the raw amino-acid sequence, 232 residues long: Flavin-dependent thymidylate synthase (232 aa).

In terms of domain architecture, ThyX spans 1 to 204; the sequence is MKIALLQHTP…PTIFRDAGPG (204 aa). FAD-binding positions include Ser55, 79–81, and Gln87; that span reads RHR. Residues 76–79, 87–91, and Arg143 each bind dUMP; these read QLVR and QQSQR. Positions 79–89 match the ThyX motif motif; that stretch reads RHRIASYSQQS. FAD-binding positions include 159 to 161 and His165; that span reads NAR. Arg170 lines the dUMP pocket. Catalysis depends on Arg170, which acts as the Involved in ionization of N3 of dUMP, leading to its activation.

Belongs to the thymidylate synthase ThyX family. In terms of assembly, homotetramer. FAD is required as a cofactor.

It carries out the reaction dUMP + (6R)-5,10-methylene-5,6,7,8-tetrahydrofolate + NADPH + H(+) = dTMP + (6S)-5,6,7,8-tetrahydrofolate + NADP(+). Its pathway is pyrimidine metabolism; dTTP biosynthesis. Its function is as follows. Catalyzes the reductive methylation of 2'-deoxyuridine-5'-monophosphate (dUMP) to 2'-deoxythymidine-5'-monophosphate (dTMP) while utilizing 5,10-methylenetetrahydrofolate (mTHF) as the methyl donor, and NADPH and FADH(2) as the reductant. This chain is Flavin-dependent thymidylate synthase, found in Geobacter sulfurreducens (strain ATCC 51573 / DSM 12127 / PCA).